A 607-amino-acid chain; its full sequence is Putative pentatricopeptide repeat-containing protein At1g09680 (607 aa).

9 PPR repeats span residues asparagine 239–proline 273, threonine 274–proline 308, aspartate 309–proline 343, asparagine 344–proline 378, aspartate 379–proline 413, aspartate 414–leucine 448, aspartate 449–proline 483, aspartate 484–proline 518, and serine 519–proline 553.

The protein belongs to the PPR family. P subfamily.

The protein is Putative pentatricopeptide repeat-containing protein At1g09680 of Arabidopsis thaliana (Mouse-ear cress).